A 308-amino-acid chain; its full sequence is Glutamyl-Q tRNA(Asp) synthetase (308 aa).

L-glutamate-binding positions include 19–23 (RFAPS) and glutamate 55. A 'HIGH' region motif is present at residues 22-32 (PSPSGELHFGS). Positions 111, 113, 125, and 129 each coordinate Zn(2+). Tyrosine 182 and arginine 200 together coordinate L-glutamate. The 'KMSKS' region signature appears at 238 to 242 (KLSKQ). Lysine 241 serves as a coordination point for ATP.

This sequence belongs to the class-I aminoacyl-tRNA synthetase family. GluQ subfamily. Zn(2+) is required as a cofactor.

In terms of biological role, catalyzes the tRNA-independent activation of glutamate in presence of ATP and the subsequent transfer of glutamate onto a tRNA(Asp). Glutamate is transferred on the 2-amino-5-(4,5-dihydroxy-2-cyclopenten-1-yl) moiety of the queuosine in the wobble position of the QUC anticodon. This chain is Glutamyl-Q tRNA(Asp) synthetase, found in Escherichia coli O6:H1 (strain CFT073 / ATCC 700928 / UPEC).